A 501-amino-acid polypeptide reads, in one-letter code: Aldehyde dehydrogenase 1A1 (501 aa).

Ser2 bears the N-acetylserine mark. Lys91 and Lys128 each carry N6-acetyllysine. Residues 167 to 170, 193 to 196, 226 to 227, and 246 to 247 each bind NAD(+); these read LPWN, KPAE, GP, and GS. Lys252 carries the post-translational modification N6-acetyllysine. The active-site Proton acceptor is the Glu269. Position 269–271 (269–271) interacts with NAD(+); it reads ELG. Cys303 serves as the catalytic Nucleophile. The tract at residues 336–501 is mediates interaction with PRMT3; the sequence is LTPGVSQGPQ…VTVKISQKNS (166 aa). A Phosphothreonine modification is found at Thr337. Residue 349-353 participates in NAD(+) binding; sequence EQYDK. Lys353 and Lys367 each carry N6-acetyllysine. 400–402 serves as a coordination point for NAD(+); sequence EIF. Lys410 is modified (N6-acetyllysine). Position 413 is a phosphoserine (Ser413). An N6-acetyllysine mark is found at Lys419, Lys435, and Lys495.

Belongs to the aldehyde dehydrogenase family. Homotetramer. Interacts with PRMT3; the interaction is direct, inhibits ALDH1A1 aldehyde dehydrogenase activity and is independent of the methyltransferase activity of PRMT3. Post-translationally, the N-terminus is blocked most probably by acetylation.

Its subcellular location is the cytoplasm. The protein localises to the cytosol. It is found in the cell projection. The protein resides in the axon. It carries out the reaction an aldehyde + NAD(+) + H2O = a carboxylate + NADH + 2 H(+). It catalyses the reaction all-trans-retinal + NAD(+) + H2O = all-trans-retinoate + NADH + 2 H(+). The enzyme catalyses 9-cis-retinal + NAD(+) + H2O = 9-cis-retinoate + NADH + 2 H(+). The catalysed reaction is 11-cis-retinal + NAD(+) + H2O = 11-cis-retinoate + NADH + 2 H(+). It carries out the reaction 13-cis-retinal + NAD(+) + H2O = 13-cis-retinoate + NADH + 2 H(+). It catalyses the reaction 3-deoxyglucosone + NAD(+) + H2O = 2-dehydro-3-deoxy-D-gluconate + NADH + 2 H(+). The enzyme catalyses (E)-4-hydroxynon-2-enal + NAD(+) + H2O = (E)-4-hydroxynon-2-enoate + NADH + 2 H(+). The catalysed reaction is malonaldehyde + NAD(+) + H2O = 3-oxopropanoate + NADH + 2 H(+). It carries out the reaction hexanal + NAD(+) + H2O = hexanoate + NADH + 2 H(+). It catalyses the reaction propanal + NAD(+) + H2O = propanoate + NADH + 2 H(+). The enzyme catalyses acetaldehyde + NAD(+) + H2O = acetate + NADH + 2 H(+). The catalysed reaction is benzaldehyde + NAD(+) + H2O = benzoate + NADH + 2 H(+). It carries out the reaction 4-aminobutanal + NAD(+) + H2O = 4-aminobutanoate + NADH + 2 H(+). It participates in cofactor metabolism; retinol metabolism. Cytosolic dehydrogenase that catalyzes the irreversible oxidation of a wide range of aldehydes to their corresponding carboxylic acid. Functions downstream of retinol dehydrogenases and catalyzes the oxidation of retinaldehyde into retinoic acid, the second step in the oxidation of retinol/vitamin A into retinoic acid. This pathway is crucial to control the levels of retinol and retinoic acid, two important molecules which excess can be teratogenic and cytotoxic. Also oxidizes aldehydes resulting from lipid peroxidation like (E)-4-hydroxynon-2-enal/HNE, malonaldehyde and hexanal that form protein adducts and are highly cytotoxic. By participating for instance to the clearance of (E)-4-hydroxynon-2-enal/HNE in the lens epithelium prevents the formation of HNE-protein adducts and lens opacification. Also functions downstream of fructosamine-3-kinase in the fructosamine degradation pathway by catalyzing the oxidation of 3-deoxyglucosone, the carbohydrate product of fructosamine 3-phosphate decomposition, which is itself a potent glycating agent that may react with lysine and arginine side-chains of proteins. Also has an aminobutyraldehyde dehydrogenase activity and is probably part of an alternative pathway for the biosynthesis of GABA/4-aminobutanoate in midbrain, thereby playing a role in GABAergic synaptic transmission. This is Aldehyde dehydrogenase 1A1 from Equus caballus (Horse).